Consider the following 318-residue polypeptide: Thymidylate synthase (318 aa).

Residues Arg-25 and 180 to 181 (RR) contribute to the dUMP site. Cys-200 serves as the catalytic Nucleophile. Residues 220–223 (RSGD), Asn-231, and 261–263 (HIY) contribute to the dUMP site. Residue Asp-223 participates in (6R)-5,10-methylene-5,6,7,8-tetrahydrofolate binding. Residue Ala-317 participates in (6R)-5,10-methylene-5,6,7,8-tetrahydrofolate binding.

Belongs to the thymidylate synthase family. Bacterial-type ThyA subfamily. In terms of assembly, homodimer.

The protein resides in the cytoplasm. It catalyses the reaction dUMP + (6R)-5,10-methylene-5,6,7,8-tetrahydrofolate = 7,8-dihydrofolate + dTMP. Its pathway is pyrimidine metabolism; dTTP biosynthesis. In terms of biological role, catalyzes the reductive methylation of 2'-deoxyuridine-5'-monophosphate (dUMP) to 2'-deoxythymidine-5'-monophosphate (dTMP) while utilizing 5,10-methylenetetrahydrofolate (mTHF) as the methyl donor and reductant in the reaction, yielding dihydrofolate (DHF) as a by-product. This enzymatic reaction provides an intracellular de novo source of dTMP, an essential precursor for DNA biosynthesis. The polypeptide is Thymidylate synthase (Bacillus thuringiensis subsp. konkukian (strain 97-27)).